The primary structure comprises 585 residues: Butyrophilin subfamily 3 member A3 (585 aa).

A signal peptide spans 1-29 (MKMASSLACLLLNFHVSVFLVQLLTPCSA). Ig-like V-type domains are found at residues 30–139 (QFSV…KALV) and 145–236 (ALGS…ASIS). Residues 30-248 (QFSVLGPSGP…DPFFTSAQPW (219 aa)) are Extracellular-facing. Cystine bridges form between cysteine 52-cysteine 126 and cysteine 166-cysteine 220. The N-linked (GlcNAc...) asparagine glycan is linked to asparagine 115. A helical membrane pass occupies residues 249–269 (IAALAGTLPISLLLLAGASYF). The Cytoplasmic segment spans residues 270–585 (LWRQQKEKIA…KPQACTEALY (316 aa)). Residues 322 to 518 (RGEKSLAYHE…LTICPTPKEV (197 aa)) enclose the B30.2/SPRY domain. The tract at residues 560 to 585 (AGAEGVSPSTTTSQNHKPQACTEALY) is disordered. Over residues 566 to 576 (SPSTTTSQNHK) the composition is skewed to polar residues.

The protein belongs to the immunoglobulin superfamily. BTN/MOG family.

The protein resides in the membrane. The chain is Butyrophilin subfamily 3 member A3 (BTN3A3) from Pongo abelii (Sumatran orangutan).